The primary structure comprises 397 residues: Aromatic-amino-acid aminotransferase (397 aa).

Glycine 34, tyrosine 66, tryptophan 131, and asparagine 184 together coordinate substrate. At lysine 247 the chain carries N6-(pyridoxal phosphate)lysine. Arginine 281 and arginine 375 together coordinate substrate.

The protein belongs to the class-I pyridoxal-phosphate-dependent aminotransferase family. Homodimer. Pyridoxal 5'-phosphate is required as a cofactor.

It localises to the cytoplasm. It catalyses the reaction an aromatic L-alpha-amino acid + 2-oxoglutarate = an aromatic oxo-acid + L-glutamate. The catalysed reaction is (3S)-3-methyl-L-phenylalanine + 2-oxoglutarate = (3S)-2-oxo-3-phenylbutanoate + L-glutamate. It participates in amino-acid biosynthesis; L-phenylalanine biosynthesis; L-phenylalanine from phenylpyruvate (ArAT route): step 1/1. Its pathway is amino-acid biosynthesis; L-tyrosine biosynthesis; L-tyrosine from (4-hydroxyphenyl)pyruvate: step 1/1. Broad-specificity enzyme that catalyzes the transamination of 2-ketoisocaproate, p-hydroxyphenylpyruvate, and phenylpyruvate to yield leucine, tyrosine, and phenylalanine, respectively. In vitro, is able to catalyze the conversion of beta-methyl phenylpyruvate to the nonproteinogenic amino acid (2S,3S)-beta-methyl-phenylalanine, a building block of the antibiotic mannopeptimycin produced by Streptomyces hygroscopicus NRRL3085. This is Aromatic-amino-acid aminotransferase (tyrB) from Escherichia coli (strain K12).